Consider the following 95-residue polypeptide: Enhancer of yellow 2b transcription factor (95 aa).

The protein belongs to the ENY2 family. Expressed specifically in testis.

Functionally, testis-specific paralog of the ubiquitously expressed transcription and mRNA export factor e(y)2. Cannot functionally replace e(y)2. This is Enhancer of yellow 2b transcription factor (e(y)2b) from Drosophila melanogaster (Fruit fly).